A 129-amino-acid polypeptide reads, in one-letter code: Small ribosomal subunit protein uS11 (129 aa).

This sequence belongs to the universal ribosomal protein uS11 family. In terms of assembly, part of the 30S ribosomal subunit. Interacts with proteins S7 and S18. Binds to IF-3.

Functionally, located on the platform of the 30S subunit, it bridges several disparate RNA helices of the 16S rRNA. Forms part of the Shine-Dalgarno cleft in the 70S ribosome. The sequence is that of Small ribosomal subunit protein uS11 from Enterococcus faecalis (strain ATCC 700802 / V583).